Consider the following 338-residue polypeptide: MKVYYDKDADLSLIKGKQITIVGYGSQGHAHAQNLKDSGCKVTVGLRKSGASWKKAEAAGLDVREVAEAVSNADIVMILLPDENIPGVYYNDVEPNIKQGATLAFAHGFNVHYNQVVPRDDLDVIMVAPKGPGHTVRSEYLKGGGVPSLIAVHQDRSGKAKDIALSYAAANGGTKGGVIETNFREETETDLFGEQAVLCGGAVELVKMGFETLTEAGYAPEMAYFECLHELKLIVDLMYEGGIANMNYSISNNAEYGEYVTGPEVINEQSREAMRAALKRIQTGEYAKMFIQEGRTNYPSMTARRRLNAAHPIEQVGGQLRDMMPWIKKNKLVDQSKN.

The 181-residue stretch at M1 to T181 folds into the KARI N-terminal Rossmann domain. NADP(+) contacts are provided by residues Y24–Q27, R47, and S52. The active site involves H107. Residue G133 participates in NADP(+) binding. In terms of domain architecture, KARI C-terminal knotted spans N182–I327. Positions 190, 194, 226, and 230 each coordinate Mg(2+). Residue S251 coordinates substrate.

It belongs to the ketol-acid reductoisomerase family. Mg(2+) is required as a cofactor.

It carries out the reaction (2R)-2,3-dihydroxy-3-methylbutanoate + NADP(+) = (2S)-2-acetolactate + NADPH + H(+). It catalyses the reaction (2R,3R)-2,3-dihydroxy-3-methylpentanoate + NADP(+) = (S)-2-ethyl-2-hydroxy-3-oxobutanoate + NADPH + H(+). It participates in amino-acid biosynthesis; L-isoleucine biosynthesis; L-isoleucine from 2-oxobutanoate: step 2/4. It functions in the pathway amino-acid biosynthesis; L-valine biosynthesis; L-valine from pyruvate: step 2/4. Its function is as follows. Involved in the biosynthesis of branched-chain amino acids (BCAA). Catalyzes an alkyl-migration followed by a ketol-acid reduction of (S)-2-acetolactate (S2AL) to yield (R)-2,3-dihydroxy-isovalerate. In the isomerase reaction, S2AL is rearranged via a Mg-dependent methyl migration to produce 3-hydroxy-3-methyl-2-ketobutyrate (HMKB). In the reductase reaction, this 2-ketoacid undergoes a metal-dependent reduction by NADPH to yield (R)-2,3-dihydroxy-isovalerate. In Aromatoleum aromaticum (strain DSM 19018 / LMG 30748 / EbN1) (Azoarcus sp. (strain EbN1)), this protein is Ketol-acid reductoisomerase (NADP(+)).